The chain runs to 1009 residues: Anillin-like protein 2 (1009 aa).

Disordered stretches follow at residues methionine 1–arginine 29, phenylalanine 272–valine 295, and glycine 539–valine 558. Residues tyrosine 542–leucine 557 are compositionally biased toward polar residues. Positions serine 626–isoleucine 657 form a coiled coil. The PH domain maps to aspartate 892 to phenylalanine 1005.

As to expression, localizes to the surface of the rachis.

Required to maintain the structure of the rachis, the central cytoplasmic core of the syncytial adult gonad. Failure to maintain the rachis leads to premature dissociation of oocytes and thereby impedes oogenesis. This chain is Anillin-like protein 2 (ani-2), found in Caenorhabditis elegans.